A 360-amino-acid polypeptide reads, in one-letter code: Probable CCR4-associated factor 1 homolog 1 (360 aa).

Asp37, Glu39, Asp155, and Asp226 together coordinate a divalent metal cation.

It belongs to the CAF1 family. In terms of assembly, component of the CCR4-NOT complex, at least composed of CRR4 and CAF1 proteins. The cofactor is a divalent metal cation.

It is found in the nucleus. The protein resides in the cytoplasm. It catalyses the reaction Exonucleolytic cleavage of poly(A) to 5'-AMP.. Ubiquitous transcription factor required for a diverse set of processes. It is a component of the CCR4 complex involved in the control of gene expression. This chain is Probable CCR4-associated factor 1 homolog 1 (CAF1-1), found in Arabidopsis thaliana (Mouse-ear cress).